A 360-amino-acid polypeptide reads, in one-letter code: Peptide chain release factor 1 (360 aa).

The residue at position 235 (Q235) is an N5-methylglutamine.

It belongs to the prokaryotic/mitochondrial release factor family. In terms of processing, methylated by PrmC. Methylation increases the termination efficiency of RF1.

The protein resides in the cytoplasm. Functionally, peptide chain release factor 1 directs the termination of translation in response to the peptide chain termination codons UAG and UAA. The polypeptide is Peptide chain release factor 1 (Paracidovorax citrulli (strain AAC00-1) (Acidovorax citrulli)).